The following is a 276-amino-acid chain: Small ribosomal subunit protein uS3 (276 aa).

The KH type-2 domain maps to 43–111 (IRQLMSTGME…QVQLNILEVK (69 aa)). Positions 218–227 (AQAASAPSRG) are enriched in low complexity. The disordered stretch occupies residues 218–276 (AQAASAPSRGPRSDRGGRPGGADRGDRRRRNDRPAADAAPAAEAPAVEAAPAAAEGGQA). The span at 228–243 (PRSDRGGRPGGADRGD) shows a compositional bias: basic and acidic residues. Low complexity predominate over residues 253 to 276 (ADAAPAAEAPAVEAAPAAAEGGQA).

The protein belongs to the universal ribosomal protein uS3 family. As to quaternary structure, part of the 30S ribosomal subunit. Forms a tight complex with proteins S10 and S14.

Its function is as follows. Binds the lower part of the 30S subunit head. Binds mRNA in the 70S ribosome, positioning it for translation. The protein is Small ribosomal subunit protein uS3 of Pseudarthrobacter chlorophenolicus (strain ATCC 700700 / DSM 12829 / CIP 107037 / JCM 12360 / KCTC 9906 / NCIMB 13794 / A6) (Arthrobacter chlorophenolicus).